Reading from the N-terminus, the 205-residue chain is ATP phosphoribosyltransferase (205 aa).

The protein belongs to the ATP phosphoribosyltransferase family. Short subfamily. In terms of assembly, heteromultimer composed of HisG and HisZ subunits.

Its subcellular location is the cytoplasm. The catalysed reaction is 1-(5-phospho-beta-D-ribosyl)-ATP + diphosphate = 5-phospho-alpha-D-ribose 1-diphosphate + ATP. It participates in amino-acid biosynthesis; L-histidine biosynthesis; L-histidine from 5-phospho-alpha-D-ribose 1-diphosphate: step 1/9. Functionally, catalyzes the condensation of ATP and 5-phosphoribose 1-diphosphate to form N'-(5'-phosphoribosyl)-ATP (PR-ATP). Has a crucial role in the pathway because the rate of histidine biosynthesis seems to be controlled primarily by regulation of HisG enzymatic activity. The protein is ATP phosphoribosyltransferase of Leptospira interrogans serogroup Icterohaemorrhagiae serovar Lai (strain 56601).